Here is a 258-residue protein sequence, read N- to C-terminus: Short-chain dehydrogenase/reductase aba4 (258 aa).

NADP(+) is bound by residues isoleucine 20, aspartate 66, and lysine 130. Catalysis depends on proton donor residues serine 146 and tyrosine 160. Positions 160, 164, 193, and 195 each coordinate NADP(+). Lysine 164 (lowers pKa of active site Tyr) is an active-site residue.

Belongs to the short-chain dehydrogenases/reductases (SDR) family.

It participates in hormone biosynthesis. Short-chain dehydrogenase/reductase; part of the gene cluster that mediates the biosynthesis of abscisic acid (ABA), a phytohormone that acts antagonistically toward salicylic acid (SA), jasmonic acid (JA) and ethylene (ETH) signaling, to impede plant defense responses. The first step of the pathway catalyzes the reaction from farnesyl diphosphate to alpha-ionylideneethane performed by the alpha-ionylideneethane synthase aba3 via a three-step reaction mechanism involving 2 neutral intermediates, beta-farnesene and allofarnesene. The cytochrome P450 monooxygenase aba1 might then be involved in the conversion of alpha-ionylideneethane to alpha-ionylideneacetic acid. Alpha-ionylideneacetic acid is further converted to abscisic acid in 2 steps involving the cytochrome P450 monooxygenase aba2 and the short-chain dehydrogenase/reductase aba4, via the intermediates 1'-deoxy-ABA or 1',4'-trans-diol-ABA, depending on the order of action of these 2 enzymes. Aba2 is responsible for the hydroxylation of carbon atom C-1' and aba4 might be involved in the oxidation of the C-4' carbon atom. The sequence is that of Short-chain dehydrogenase/reductase aba4 from Botryotinia fuckeliana (strain B05.10) (Noble rot fungus).